The following is a 492-amino-acid chain: Transcript termination protein OPG145 (492 aa).

The 157-residue stretch at 100–256 (MIELKRPLYI…NSIINIAKLS (157 aa)) folds into the Helicase ATP-binding domain. 113 to 120 (LACGFGKT) is an ATP binding site. The DEAH box motif lies at 206 to 209 (DESH).

Belongs to the helicase family. Poxviruses subfamily. In terms of assembly, interacts with OPG087. Might be part of a transcription complex composed at least of OPG087, OPG110, and OPG145.

The protein resides in the virion. DNA helicase which seems to act as a postreplicative transcription termination factor. Involved in ATP-dependent release of nascent RNA. Forms a stable complex with single-stranded DNA, and to a lesser extent RNA. This Cynomys gunnisoni (Gunnison's prairie dog) protein is Transcript termination protein OPG145 (OPG145).